A 447-amino-acid chain; its full sequence is MLHRYLPMTEEDKKEMLQTIGVQTIDELFSDIPESVRFKGDLKIKEAKSESELLKELSQMASKNANLKEYASFLGAGVYDHYAPVIVDHVISRSEFYTAYTPYQPEISQGELQAIFEFQTMICELTGMDVANSSMYDGGTALAEAAMLAAGHTRKKKILVSSAVHPESRAVLETYAKGQHLEVVEINHKDGVTDLDVLQSEVDDTVACVIVQYPNFFGQVEKLADIEKIVHQQKSLFIVSSNPLSLGALTPPGKFGADIVIGDAQPFGIPTQFGGPHCGYFATTKAFMRKIPGRLVGQTVDSDGKRGFVLTLQAREQHIRRDKATSNICSNQALNALAASVAMTALGKQGVKEMARQNISKAQYAKRQFEAKGFTVTFAGPFFNEFVVDCKRPVKEVNDALLQKNIIGGYDLGRDYKEHENHMLVAVTELRTKEEIDTLVNEMGAIQ.

This sequence belongs to the GcvP family. N-terminal subunit subfamily. In terms of assembly, the glycine cleavage system is composed of four proteins: P, T, L and H. In this organism, the P 'protein' is a heterodimer of two subunits.

The catalysed reaction is N(6)-[(R)-lipoyl]-L-lysyl-[glycine-cleavage complex H protein] + glycine + H(+) = N(6)-[(R)-S(8)-aminomethyldihydrolipoyl]-L-lysyl-[glycine-cleavage complex H protein] + CO2. In terms of biological role, the glycine cleavage system catalyzes the degradation of glycine. The P protein binds the alpha-amino group of glycine through its pyridoxal phosphate cofactor; CO(2) is released and the remaining methylamine moiety is then transferred to the lipoamide cofactor of the H protein. The protein is Probable glycine dehydrogenase (decarboxylating) subunit 1 of Bacillus cereus (strain ATCC 10987 / NRS 248).